We begin with the raw amino-acid sequence, 433 residues long: Serine--tRNA ligase (433 aa).

235–237 (TSE) contributes to the L-serine binding site. 266-268 (RSE) serves as a coordination point for ATP. An L-serine-binding site is contributed by Glu-289. 353–356 (EISS) lines the ATP pocket. Ser-388 contributes to the L-serine binding site.

This sequence belongs to the class-II aminoacyl-tRNA synthetase family. Type-1 seryl-tRNA synthetase subfamily. As to quaternary structure, homodimer. The tRNA molecule binds across the dimer.

The protein localises to the cytoplasm. It catalyses the reaction tRNA(Ser) + L-serine + ATP = L-seryl-tRNA(Ser) + AMP + diphosphate + H(+). The catalysed reaction is tRNA(Sec) + L-serine + ATP = L-seryl-tRNA(Sec) + AMP + diphosphate + H(+). It participates in aminoacyl-tRNA biosynthesis; selenocysteinyl-tRNA(Sec) biosynthesis; L-seryl-tRNA(Sec) from L-serine and tRNA(Sec): step 1/1. Its function is as follows. Catalyzes the attachment of serine to tRNA(Ser). Is also able to aminoacylate tRNA(Sec) with serine, to form the misacylated tRNA L-seryl-tRNA(Sec), which will be further converted into selenocysteinyl-tRNA(Sec). The chain is Serine--tRNA ligase from Burkholderia cenocepacia (strain HI2424).